A 285-amino-acid chain; its full sequence is MANIDLHFHSRTSDGALTPTEVIDRAAARAPALLALTDHDCTGGLAEAAAAAARRGIPFLNGVEVSVSWGRHTVHIVGLGIDPAEPALAAGLKSIREGRLERARQMGASLEAAGIAGCFDGAMRWCDNPEMISRTHFARHLVDSGAVKDMRTVFRKYLTPGKPGYVSHQWASLEDAVGWIVGAGGMAVIAHPGRYDMGRTLIERLILDFQAAGGQGIEVASGSHSLDDMHKFALHADRHGLYASSGSDFHAPGEGGRDVGHTEDLPPICRPIWRELEARILRPAD.

Residues H7, H9, D14, H39, E64, and H75 each coordinate Mn(2+). Substrate-binding residues include D14 and H39. Substrate contacts are provided by residues 99 to 102 (RLER) and 134 to 135 (RT). Positions 191, 248, and 250 each coordinate Mn(2+). H250 contributes to the substrate binding site.

It belongs to the PHP family. In terms of assembly, monomer. Requires Mn(2+) as cofactor.

The catalysed reaction is a ribonucleoside 3',5'-bisphosphate + H2O = a ribonucleoside 5'-phosphate + phosphate. In terms of biological role, hydrolyzes 3',5'-bisphosphonucleosides (pGp, pCp, pUp, and pIp) to nucleoside 5'-phosphate and orthophosphate. Has similar catalytic efficiencies with all the bases. Also shows activity with ribonucleoside 2'-deoxyribonucleoside 3',5'-bisphosphates. Does not show activity with nucleoside 2',5'-bisphosphates. The chain is 3',5'-nucleoside bisphosphate phosphatase from Chromobacterium violaceum (strain ATCC 12472 / DSM 30191 / JCM 1249 / CCUG 213 / NBRC 12614 / NCIMB 9131 / NCTC 9757 / MK).